We begin with the raw amino-acid sequence, 346 residues long: uncharacterized protein (346 aa).

The disordered stretch occupies residues 10 to 109; the sequence is WDFIMTDPSS…SNSNGNNSPV (100 aa). Residues 26-44 are compositionally biased toward low complexity; that stretch reads KGSSKNGSPKTSSPKSGSP. A compositionally biased stretch (polar residues) spans 56–67; that stretch reads NQQLLQNDSINL. Residues 94–109 show a composition bias toward low complexity; it reads KSSVVPSNSNGNNSPV.

This is an uncharacterized protein from Dictyostelium discoideum (Social amoeba).